A 302-amino-acid chain; its full sequence is uncharacterized protein (302 aa).

3 disordered regions span residues 15–34, 143–195, and 221–246; these read RHST…RFHK, GMPL…PSHL, and GSEA…RESV. Residues 172–189 show a composition bias toward basic and acidic residues; the sequence is HSDENKATGQGRENRDQP.

This is an uncharacterized protein from Homo sapiens (Human).